The chain runs to 464 residues: 3-isopropylmalate dehydratase large subunit (464 aa).

[4Fe-4S] cluster is bound by residues cysteine 337, cysteine 397, and cysteine 400.

It belongs to the aconitase/IPM isomerase family. LeuC type 1 subfamily. As to quaternary structure, heterodimer of LeuC and LeuD. It depends on [4Fe-4S] cluster as a cofactor.

The catalysed reaction is (2R,3S)-3-isopropylmalate = (2S)-2-isopropylmalate. The protein operates within amino-acid biosynthesis; L-leucine biosynthesis; L-leucine from 3-methyl-2-oxobutanoate: step 2/4. Its function is as follows. Catalyzes the isomerization between 2-isopropylmalate and 3-isopropylmalate, via the formation of 2-isopropylmaleate. The protein is 3-isopropylmalate dehydratase large subunit of Bacillus cereus (strain 03BB102).